Reading from the N-terminus, the 473-residue chain is Photosystem II CP43 reaction center protein (473 aa).

Positions M1–E14 are excised as a propeptide. Position 15 is an N-acetylthreonine (T15). The residue at position 15 (T15) is a Phosphothreonine. A run of 5 helical transmembrane segments spans residues L69–A93, L134–N155, K178–T200, K255–S275, and W291–A312. Residue E367 coordinates [CaMn4O5] cluster. Residues R447–P471 traverse the membrane as a helical segment.

The protein belongs to the PsbB/PsbC family. PsbC subfamily. In terms of assembly, PSII is composed of 1 copy each of membrane proteins PsbA, PsbB, PsbC, PsbD, PsbE, PsbF, PsbH, PsbI, PsbJ, PsbK, PsbL, PsbM, PsbT, PsbX, PsbY, PsbZ, Psb30/Ycf12, at least 3 peripheral proteins of the oxygen-evolving complex and a large number of cofactors. It forms dimeric complexes. It depends on Binds multiple chlorophylls and provides some of the ligands for the Ca-4Mn-5O cluster of the oxygen-evolving complex. It may also provide a ligand for a Cl- that is required for oxygen evolution. PSII binds additional chlorophylls, carotenoids and specific lipids. as a cofactor.

It localises to the plastid. Its subcellular location is the chloroplast thylakoid membrane. Functionally, one of the components of the core complex of photosystem II (PSII). It binds chlorophyll and helps catalyze the primary light-induced photochemical processes of PSII. PSII is a light-driven water:plastoquinone oxidoreductase, using light energy to abstract electrons from H(2)O, generating O(2) and a proton gradient subsequently used for ATP formation. The sequence is that of Photosystem II CP43 reaction center protein from Mesostigma viride (Green alga).